A 196-amino-acid polypeptide reads, in one-letter code: Potassium-transporting ATPase KdpC subunit (196 aa).

The helical transmembrane segment at 7–27 (PAIVSAGLFTVLLGLAYPLAV) threads the bilayer.

It belongs to the KdpC family. The system is composed of three essential subunits: KdpA, KdpB and KdpC.

Its subcellular location is the cell inner membrane. Part of the high-affinity ATP-driven potassium transport (or Kdp) system, which catalyzes the hydrolysis of ATP coupled with the electrogenic transport of potassium into the cytoplasm. This subunit acts as a catalytic chaperone that increases the ATP-binding affinity of the ATP-hydrolyzing subunit KdpB by the formation of a transient KdpB/KdpC/ATP ternary complex. This is Potassium-transporting ATPase KdpC subunit from Caulobacter sp. (strain K31).